Reading from the N-terminus, the 412-residue chain is Phosphoglycerate kinase 1 (412 aa).

Residues 28 to 30, 65 to 68, R122, and R162 contribute to the substrate site; these read DFN and HQGR. ATP-binding positions include E336 and 361 to 364; that span reads GGHT.

It belongs to the phosphoglycerate kinase family. As to quaternary structure, monomer.

It localises to the cytoplasm. The enzyme catalyses (2R)-3-phosphoglycerate + ATP = (2R)-3-phospho-glyceroyl phosphate + ADP. It participates in carbohydrate degradation; glycolysis; pyruvate from D-glyceraldehyde 3-phosphate: step 2/5. This is Phosphoglycerate kinase 1 from Methanosarcina acetivorans (strain ATCC 35395 / DSM 2834 / JCM 12185 / C2A).